Reading from the N-terminus, the 604-residue chain is Glutamine--fructose-6-phosphate aminotransferase [isomerizing] (604 aa).

The active-site Nucleophile; for GATase activity is Cys-2. In terms of domain architecture, Glutamine amidotransferase type-2 spans 2–218 (CGIVGVVGNR…DKELVVLTKD (217 aa)). SIS domains follow at residues 284 to 423 (IVKS…ANGK) and 456 to 594 (VANL…VDKP). Lys-599 functions as the For Fru-6P isomerization activity in the catalytic mechanism.

In terms of assembly, homodimer.

It is found in the cytoplasm. The catalysed reaction is D-fructose 6-phosphate + L-glutamine = D-glucosamine 6-phosphate + L-glutamate. Its function is as follows. Catalyzes the first step in hexosamine metabolism, converting fructose-6P into glucosamine-6P using glutamine as a nitrogen source. The polypeptide is Glutamine--fructose-6-phosphate aminotransferase [isomerizing] (Streptococcus mutans serotype c (strain ATCC 700610 / UA159)).